We begin with the raw amino-acid sequence, 185 residues long: Elongation factor P (185 aa).

It belongs to the elongation factor P family.

The protein localises to the cytoplasm. It functions in the pathway protein biosynthesis; polypeptide chain elongation. Involved in peptide bond synthesis. Stimulates efficient translation and peptide-bond synthesis on native or reconstituted 70S ribosomes in vitro. Probably functions indirectly by altering the affinity of the ribosome for aminoacyl-tRNA, thus increasing their reactivity as acceptors for peptidyl transferase. The protein is Elongation factor P of Staphylococcus carnosus (strain TM300).